The chain runs to 520 residues: Ribonuclease Y (520 aa).

Residues Val4–Leu24 traverse the membrane as a helical segment. The KH domain occupies Thr210–Leu270. In terms of domain architecture, HD spans Val336–Ala429.

The protein belongs to the RNase Y family.

It is found in the cell membrane. Endoribonuclease that initiates mRNA decay. In Syntrophobacter fumaroxidans (strain DSM 10017 / MPOB), this protein is Ribonuclease Y.